We begin with the raw amino-acid sequence, 663 residues long: Translation factor GUF1 homolog, mitochondrial (663 aa).

In terms of domain architecture, tr-type G spans 64–250 (EKIRNFSIIA…AVIERIPPPP (187 aa)). GTP-binding positions include 73–80 (AHIDHGKS), 143–147 (DTPGH), and 197–200 (NKID).

The protein belongs to the TRAFAC class translation factor GTPase superfamily. Classic translation factor GTPase family. LepA subfamily.

The protein resides in the mitochondrion inner membrane. The enzyme catalyses GTP + H2O = GDP + phosphate + H(+). Functionally, promotes mitochondrial protein synthesis. May act as a fidelity factor of the translation reaction, by catalyzing a one-codon backward translocation of tRNAs on improperly translocated ribosomes. Binds to mitochondrial ribosomes in a GTP-dependent manner. This is Translation factor GUF1 homolog, mitochondrial from Arabidopsis thaliana (Mouse-ear cress).